The primary structure comprises 355 residues: NADH-quinone oxidoreductase subunit H (355 aa).

8 helical membrane passes run 25 to 45 (IVRILVVSVVILLCVAYLILW), 91 to 111 (WLYLIAPVMTVVPAFAVWAVI), 126 to 146 (LLYAMAISSIGVYAVILAGWA), 170 to 190 (MGFALVLVLMTAGSLNLSEIV), 205 to 225 (FLSWNWLPLLPAFVVYFISGI), 252 to 272 (GMAFALFFLAEYINMIVISAL), 290 to 310 (FIPGIFWLVLKIFALLSVFIW), and 330 to 350 (VFLPVTVVWVVVVGFWMMSPL).

This sequence belongs to the complex I subunit 1 family. NDH-1 is composed of 14 different subunits. Subunits NuoA, H, J, K, L, M, N constitute the membrane sector of the complex.

It localises to the cell inner membrane. It catalyses the reaction a quinone + NADH + 5 H(+)(in) = a quinol + NAD(+) + 4 H(+)(out). Functionally, NDH-1 shuttles electrons from NADH, via FMN and iron-sulfur (Fe-S) centers, to quinones in the respiratory chain. The immediate electron acceptor for the enzyme in this species is believed to be ubiquinone. Couples the redox reaction to proton translocation (for every two electrons transferred, four hydrogen ions are translocated across the cytoplasmic membrane), and thus conserves the redox energy in a proton gradient. This subunit may bind ubiquinone. This Burkholderia lata (strain ATCC 17760 / DSM 23089 / LMG 22485 / NCIMB 9086 / R18194 / 383) protein is NADH-quinone oxidoreductase subunit H.